The sequence spans 235 residues: Coiled-coil domain-containing protein 71L (235 aa).

A compositionally biased stretch (basic residues) spans 1-13 (MRRSMKRRRRRRP). The tract at residues 1–30 (MRRSMKRRRRRRPVAPATAARGGDFRAEDG) is disordered. A phosphoserine mark is found at serine 52 and serine 89. Positions 109 to 167 (PDPPGPPTARGQARRPVPRAAARRRRRGARAAAARRRKPRPPPPPPPPPEESCPAKPVA) are disordered. A compositionally biased stretch (basic residues) spans 120-148 (QARRPVPRAAARRRRRGARAAAARRRKPR). Residues 149-159 (PPPPPPPPPEE) show a composition bias toward pro residues. Phosphothreonine is present on threonine 185. A Phosphoserine modification is found at serine 198.

In Homo sapiens (Human), this protein is Coiled-coil domain-containing protein 71L (CCDC71L).